The sequence spans 314 residues: ATP synthase gamma chain (314 aa).

The protein belongs to the ATPase gamma chain family. In terms of assembly, F-type ATPases have 2 components, CF(1) - the catalytic core - and CF(0) - the membrane proton channel. CF(1) has five subunits: alpha(3), beta(3), gamma(1), delta(1), epsilon(1). CF(0) has three main subunits: a, b and c.

It is found in the cellular thylakoid membrane. Its function is as follows. Produces ATP from ADP in the presence of a proton gradient across the membrane. The gamma chain is believed to be important in regulating ATPase activity and the flow of protons through the CF(0) complex. In Rippkaea orientalis (strain PCC 8801 / RF-1) (Cyanothece sp. (strain PCC 8801)), this protein is ATP synthase gamma chain.